A 337-amino-acid chain; its full sequence is Perakine reductase (337 aa).

The Proton donor role is filled by Y57. A substrate-binding site is contributed by H126. Residue 205–214 (SPIGRGLFAG) participates in NADP(+) binding.

The protein belongs to the aldo/keto reductase family.

It carries out the reaction raucaffrinoline + NADP(+) = perakine + NADPH + H(+). Aldo-keto reductase involved in the biosynthesis of monoterpenoid indole alkaloids. Broad substrate specificity enzyme with a high selectivity in the group of alkaloids. Can use perakine, 19(S),20(R)-dihydro-peraksine-17,21-al, cinnamic aldehyde, p-coumaric aldehyde and 3-(3,4,5-trimethoxyphenyl)propanal as substrates, but not ketosteroids such as progesterone. NADPH could not be replaced by NADH. The chain is Perakine reductase (PR) from Rauvolfia serpentina (Serpentine wood).